We begin with the raw amino-acid sequence, 572 residues long: Asparagine synthetase [glutamine-hydrolyzing] 1 (572 aa).

Cys-2 acts as the For GATase activity in catalysis. One can recognise a Glutamine amidotransferase type-2 domain in the interval 2–186 (CGIFAAFRHE…PGHVYDSKTD (185 aa)). L-glutamine contacts are provided by residues 49–53 (RLAIV), 74–76 (NGE), and Asp-97. In terms of domain architecture, Asparagine synthetase spans 194–546 (PDWLDEKRIP…QKTVADTVMR (353 aa)). Position 233 (Leu-233) interacts with ATP. Ser-265 is subject to Phosphoserine. Residues Ile-292 and 366–367 (SG) contribute to the ATP site. At Ser-509 the chain carries Phosphoserine.

It catalyses the reaction L-aspartate + L-glutamine + ATP + H2O = L-asparagine + L-glutamate + AMP + diphosphate + H(+). It functions in the pathway amino-acid biosynthesis; L-asparagine biosynthesis; L-asparagine from L-aspartate (L-Gln route): step 1/1. In Saccharomyces cerevisiae (strain ATCC 204508 / S288c) (Baker's yeast), this protein is Asparagine synthetase [glutamine-hydrolyzing] 1 (ASN1).